We begin with the raw amino-acid sequence, 179 residues long: Inosine/xanthosine triphosphatase (179 aa).

Residue glutamate 71 participates in Mg(2+) binding. A substrate-binding site is contributed by 71–72 (EA).

It belongs to the YjjX NTPase family. Homodimer. The cofactor is Mg(2+). Mn(2+) is required as a cofactor.

It catalyses the reaction XTP + H2O = XDP + phosphate + H(+). The enzyme catalyses ITP + H2O = IDP + phosphate + H(+). Its function is as follows. Phosphatase that hydrolyzes non-canonical purine nucleotides such as XTP and ITP to their respective diphosphate derivatives. Probably excludes non-canonical purines from DNA/RNA precursor pool, thus preventing their incorporation into DNA/RNA and avoiding chromosomal lesions. The sequence is that of Inosine/xanthosine triphosphatase from Shewanella sp. (strain MR-4).